The chain runs to 336 residues: tRNA N6-adenosine threonylcarbamoyltransferase (336 aa).

Positions 112 and 116 each coordinate Fe cation. Substrate-binding positions include 136–140 (LVSGG), D169, G182, and N276. D304 provides a ligand contact to Fe cation.

This sequence belongs to the KAE1 / TsaD family. Fe(2+) is required as a cofactor.

The protein localises to the cytoplasm. It carries out the reaction L-threonylcarbamoyladenylate + adenosine(37) in tRNA = N(6)-L-threonylcarbamoyladenosine(37) in tRNA + AMP + H(+). Functionally, required for the formation of a threonylcarbamoyl group on adenosine at position 37 (t(6)A37) in tRNAs that read codons beginning with adenine. Is involved in the transfer of the threonylcarbamoyl moiety of threonylcarbamoyl-AMP (TC-AMP) to the N6 group of A37, together with TsaE and TsaB. TsaD likely plays a direct catalytic role in this reaction. In Francisella tularensis subsp. holarctica (strain FTNF002-00 / FTA), this protein is tRNA N6-adenosine threonylcarbamoyltransferase.